Consider the following 196-residue polypeptide: DnaA initiator-associating protein DiaA (196 aa).

The 163-residue stretch at 34-196 folds into the SIS domain; sequence LVQSLLNGNK…DNTLFPHQDD (163 aa).

The protein belongs to the SIS family. DiaA subfamily. Homotetramer; dimer of dimers.

Required for the timely initiation of chromosomal replication via direct interactions with the DnaA initiator protein. The chain is DnaA initiator-associating protein DiaA from Yersinia enterocolitica serotype O:8 / biotype 1B (strain NCTC 13174 / 8081).